A 391-amino-acid polypeptide reads, in one-letter code: Putative penicillin-binding protein PbpX (391 aa).

A helical membrane pass occupies residues 21 to 40; that stretch reads GKLLFGLLAVMVCITIWNAL. The disordered stretch occupies residues 44-76; sequence SEENEPSQETAAVSNTDQKKEVKKKTAKKSEEQ. Over residues 50 to 59 the composition is skewed to polar residues; it reads SQETAAVSNT.

This sequence belongs to the beta-lactamase family.

It is found in the cell membrane. This Bacillus subtilis (strain 168) protein is Putative penicillin-binding protein PbpX (pbpX).